A 336-amino-acid polypeptide reads, in one-letter code: Fructose-1,6-bisphosphatase class 1 (336 aa).

The Mg(2+) site is built by Glu92, Asp115, Leu117, and Asp118. Substrate contacts are provided by residues 118 to 121 (DGSS), Asn211, Tyr244, 262 to 264 (YLY), and Lys274. Glu280 contributes to the Mg(2+) binding site.

It belongs to the FBPase class 1 family. Homotetramer. Mg(2+) serves as cofactor.

The protein localises to the cytoplasm. The enzyme catalyses beta-D-fructose 1,6-bisphosphate + H2O = beta-D-fructose 6-phosphate + phosphate. The protein operates within carbohydrate biosynthesis; gluconeogenesis. The polypeptide is Fructose-1,6-bisphosphatase class 1 (Aliivibrio fischeri (strain ATCC 700601 / ES114) (Vibrio fischeri)).